The chain runs to 696 residues: Gametogenetin-binding protein 2 (696 aa).

Ser360 is modified (phosphoserine).

As to quaternary structure, interacts with GGN.

Its subcellular location is the cytoplasmic vesicle. Functionally, may be involved in spermatogenesis. The polypeptide is Gametogenetin-binding protein 2 (Ggnbp2) (Rattus norvegicus (Rat)).